A 286-amino-acid polypeptide reads, in one-letter code: NAD kinase (286 aa).

Catalysis depends on Asp-66, which acts as the Proton acceptor. NAD(+) contacts are provided by residues 66 to 67 (DG), 137 to 138 (ND), Arg-148, Arg-165, Asp-167, and 178 to 183 (TAYSMS).

This sequence belongs to the NAD kinase family. A divalent metal cation is required as a cofactor.

The protein resides in the cytoplasm. It catalyses the reaction NAD(+) + ATP = ADP + NADP(+) + H(+). Functionally, involved in the regulation of the intracellular balance of NAD and NADP, and is a key enzyme in the biosynthesis of NADP. Catalyzes specifically the phosphorylation on 2'-hydroxyl of the adenosine moiety of NAD to yield NADP. The protein is NAD kinase of Chlorobium chlorochromatii (strain CaD3).